We begin with the raw amino-acid sequence, 303 residues long: UDP-N-acetylenolpyruvoylglucosamine reductase (303 aa).

The 166-residue stretch at 30-195 folds into the FAD-binding PCMH-type domain; it reads KTGGPADLLA…LSARFEMAKG (166 aa). Residue arginine 174 is part of the active site. Serine 224 acts as the Proton donor in catalysis. Glutamate 294 is an active-site residue.

This sequence belongs to the MurB family. FAD is required as a cofactor.

The protein resides in the cytoplasm. It catalyses the reaction UDP-N-acetyl-alpha-D-muramate + NADP(+) = UDP-N-acetyl-3-O-(1-carboxyvinyl)-alpha-D-glucosamine + NADPH + H(+). The protein operates within cell wall biogenesis; peptidoglycan biosynthesis. Functionally, cell wall formation. This is UDP-N-acetylenolpyruvoylglucosamine reductase from Latilactobacillus sakei subsp. sakei (strain 23K) (Lactobacillus sakei subsp. sakei).